A 122-amino-acid polypeptide reads, in one-letter code: Large ribosomal subunit protein uL14 (122 aa).

This sequence belongs to the universal ribosomal protein uL14 family. As to quaternary structure, part of the 50S ribosomal subunit. Forms a cluster with proteins L3 and L19. In the 70S ribosome, L14 and L19 interact and together make contacts with the 16S rRNA in bridges B5 and B8.

Its function is as follows. Binds to 23S rRNA. Forms part of two intersubunit bridges in the 70S ribosome. This Bordetella parapertussis (strain 12822 / ATCC BAA-587 / NCTC 13253) protein is Large ribosomal subunit protein uL14.